A 365-amino-acid chain; its full sequence is Chorismate synthase (365 aa).

NADP(+) is bound at residue Arg-48. FMN is bound by residues 125–127 (RGS), Gly-286, 301–305 (KPTPS), and Arg-328.

The protein belongs to the chorismate synthase family. FMNH2 is required as a cofactor.

The enzyme catalyses 5-O-(1-carboxyvinyl)-3-phosphoshikimate = chorismate + phosphate. It participates in metabolic intermediate biosynthesis; chorismate biosynthesis; chorismate from D-erythrose 4-phosphate and phosphoenolpyruvate: step 7/7. Functionally, catalyzes the anti-1,4-elimination of the C-3 phosphate and the C-6 proR hydrogen from 5-enolpyruvylshikimate-3-phosphate (EPSP) to yield chorismate, which is the branch point compound that serves as the starting substrate for the three terminal pathways of aromatic amino acid biosynthesis. This reaction introduces a second double bond into the aromatic ring system. This is Chorismate synthase from Methanosphaera stadtmanae (strain ATCC 43021 / DSM 3091 / JCM 11832 / MCB-3).